The following is a 256-amino-acid chain: Hydroxyacylglutathione hydrolase (256 aa).

Residues His55, His57, Asp59, His60, His113, Asp130, and His168 each contribute to the Zn(2+) site.

This sequence belongs to the metallo-beta-lactamase superfamily. Glyoxalase II family. In terms of assembly, monomer. Requires Zn(2+) as cofactor.

The catalysed reaction is an S-(2-hydroxyacyl)glutathione + H2O = a 2-hydroxy carboxylate + glutathione + H(+). It participates in secondary metabolite metabolism; methylglyoxal degradation; (R)-lactate from methylglyoxal: step 2/2. Its function is as follows. Thiolesterase that catalyzes the hydrolysis of S-D-lactoyl-glutathione to form glutathione and D-lactic acid. This chain is Hydroxyacylglutathione hydrolase, found in Alkalilimnicola ehrlichii (strain ATCC BAA-1101 / DSM 17681 / MLHE-1).